The chain runs to 585 residues: Switch-associated protein 70 (585 aa).

One can recognise a PH domain in the interval 210–306 (DVLKQGYMIK…WIQAIHSTIH (97 aa)). Positions 316–532 (HKEARQRRKE…KLEMAAKMTK (217 aa)) form a coiled coil.

In terms of assembly, the SWAP complex consists of NPM1, NCL, PARP1 and SWAP70. Post-translationally, tyrosine-phosphorylated.

It is found in the cytoplasm. It localises to the cell membrane. The protein localises to the nucleus. Its subcellular location is the cell projection. The protein resides in the lamellipodium. Phosphatidylinositol 3,4,5-trisphosphate-dependent guanine nucleotide exchange factor (GEF) which, independently of RAS, transduces signals from tyrosine kinase receptors to RAC. It also mediates signaling of membrane ruffling. Regulates the actin cytoskeleton as an effector or adapter protein in response to agonist stimulated phosphatidylinositol (3,4)-bisphosphate production and cell protrusion. This is Switch-associated protein 70 (SWAP70) from Bos taurus (Bovine).